Consider the following 142-residue polypeptide: Large ribosomal subunit protein uL11 (142 aa).

This sequence belongs to the universal ribosomal protein uL11 family. Part of the ribosomal stalk of the 50S ribosomal subunit. Interacts with L10 and the large rRNA to form the base of the stalk. L10 forms an elongated spine to which L12 dimers bind in a sequential fashion forming a multimeric L10(L12)X complex. Post-translationally, one or more lysine residues are methylated.

Forms part of the ribosomal stalk which helps the ribosome interact with GTP-bound translation factors. This chain is Large ribosomal subunit protein uL11, found in Beijerinckia indica subsp. indica (strain ATCC 9039 / DSM 1715 / NCIMB 8712).